The chain runs to 738 residues: LPS-assembly protein LptD (738 aa).

Positions M1–A26 are cleaved as a signal peptide.

It belongs to the LptD family. As to quaternary structure, component of the lipopolysaccharide transport and assembly complex. Interacts with LptE and LptA.

The protein resides in the cell outer membrane. In terms of biological role, together with LptE, is involved in the assembly of lipopolysaccharide (LPS) at the surface of the outer membrane. This is LPS-assembly protein LptD from Nitrosococcus oceani (strain ATCC 19707 / BCRC 17464 / JCM 30415 / NCIMB 11848 / C-107).